Reading from the N-terminus, the 338-residue chain is RNA 3'-terminal phosphate cyclase (338 aa).

Residues Q103 and 283-287 (YLADQ) each bind ATP. H308 functions as the Tele-AMP-histidine intermediate in the catalytic mechanism.

Belongs to the RNA 3'-terminal cyclase family. Type 1 subfamily.

The protein localises to the cytoplasm. The catalysed reaction is a 3'-end 3'-phospho-ribonucleotide-RNA + ATP = a 3'-end 2',3'-cyclophospho-ribonucleotide-RNA + AMP + diphosphate. Catalyzes the conversion of 3'-phosphate to a 2',3'-cyclic phosphodiester at the end of RNA. The mechanism of action of the enzyme occurs in 3 steps: (A) adenylation of the enzyme by ATP; (B) transfer of adenylate to an RNA-N3'P to produce RNA-N3'PP5'A; (C) and attack of the adjacent 2'-hydroxyl on the 3'-phosphorus in the diester linkage to produce the cyclic end product. The biological role of this enzyme is unknown but it is likely to function in some aspects of cellular RNA processing. The protein is RNA 3'-terminal phosphate cyclase of Shigella boydii serotype 4 (strain Sb227).